The following is a 51-amino-acid chain: Insulin (51 aa).

Disulfide bonds link Cys7-Cys37, Cys19-Cys50, and Cys36-Cys41.

The protein belongs to the insulin family. As to quaternary structure, heterodimer of a B chain and an A chain linked by two disulfide bonds.

The protein resides in the secreted. Functionally, insulin decreases blood glucose concentration. It increases cell permeability to monosaccharides, amino acids and fatty acids. It accelerates glycolysis, the pentose phosphate cycle, and glycogen synthesis in liver. This chain is Insulin (INS), found in Acomys cahirinus (Cairo spiny mouse).